The primary structure comprises 314 residues: Putative gluconeogenesis factor (314 aa).

The protein belongs to the gluconeogenesis factor family.

It is found in the cytoplasm. Its function is as follows. Required for morphogenesis under gluconeogenic growth conditions. The polypeptide is Putative gluconeogenesis factor (Thermotoga maritima (strain ATCC 43589 / DSM 3109 / JCM 10099 / NBRC 100826 / MSB8)).